We begin with the raw amino-acid sequence, 302 residues long: Oxygen-dependent coproporphyrinogen-III oxidase (302 aa).

Ser94 serves as a coordination point for substrate. Positions 98 and 108 each coordinate a divalent metal cation. The Proton donor role is filled by His108. Residue Asn110–Arg112 coordinates substrate. Positions 147 and 177 each coordinate a divalent metal cation. Residues Tyr242–Gln277 are important for dimerization. Gly260–Arg262 provides a ligand contact to substrate.

The protein belongs to the aerobic coproporphyrinogen-III oxidase family. Homodimer. A divalent metal cation is required as a cofactor.

It is found in the cytoplasm. The catalysed reaction is coproporphyrinogen III + O2 + 2 H(+) = protoporphyrinogen IX + 2 CO2 + 2 H2O. It functions in the pathway porphyrin-containing compound metabolism; protoporphyrin-IX biosynthesis; protoporphyrinogen-IX from coproporphyrinogen-III (O2 route): step 1/1. Functionally, involved in the heme biosynthesis. Catalyzes the aerobic oxidative decarboxylation of propionate groups of rings A and B of coproporphyrinogen-III to yield the vinyl groups in protoporphyrinogen-IX. The sequence is that of Oxygen-dependent coproporphyrinogen-III oxidase from Shewanella oneidensis (strain ATCC 700550 / JCM 31522 / CIP 106686 / LMG 19005 / NCIMB 14063 / MR-1).